A 417-amino-acid polypeptide reads, in one-letter code: Serine hydroxymethyltransferase (417 aa).

(6S)-5,6,7,8-tetrahydrofolate contacts are provided by residues L121 and 125-127 (GHL). K229 is modified (N6-(pyridoxal phosphate)lysine). 355 to 357 (SPF) lines the (6S)-5,6,7,8-tetrahydrofolate pocket.

Belongs to the SHMT family. As to quaternary structure, homodimer. Pyridoxal 5'-phosphate serves as cofactor.

The protein resides in the cytoplasm. It carries out the reaction (6R)-5,10-methylene-5,6,7,8-tetrahydrofolate + glycine + H2O = (6S)-5,6,7,8-tetrahydrofolate + L-serine. The protein operates within one-carbon metabolism; tetrahydrofolate interconversion. It participates in amino-acid biosynthesis; glycine biosynthesis; glycine from L-serine: step 1/1. Catalyzes the reversible interconversion of serine and glycine with tetrahydrofolate (THF) serving as the one-carbon carrier. This reaction serves as the major source of one-carbon groups required for the biosynthesis of purines, thymidylate, methionine, and other important biomolecules. Also exhibits THF-independent aldolase activity toward beta-hydroxyamino acids, producing glycine and aldehydes, via a retro-aldol mechanism. In Buchnera aphidicola subsp. Acyrthosiphon pisum (strain 5A), this protein is Serine hydroxymethyltransferase.